The chain runs to 180 residues: Beta-lactoglobulin-1 (180 aa).

The first 18 residues, 1-18, serve as a signal peptide directing secretion; that stretch reads MKCLLLALGLALMCGIQA. 2 disulfide bridges follow: cysteine 84–cysteine 178 and cysteine 124–cysteine 137.

This sequence belongs to the calycin superfamily. Lipocalin family. Monomer.

Its subcellular location is the secreted. Its function is as follows. Lactoglobulin is the primary component of whey, it binds retinol and is probably involved in the transport of that molecule. This Equus caballus (Horse) protein is Beta-lactoglobulin-1 (LGB1).